The following is a 238-amino-acid chain: Probable RNA/DNA demethylase ALKBH6 (238 aa).

The Fe2OG dioxygenase domain maps to 96-227 (PANHVLVNQY…RVSLTIRRVP (132 aa)). 2-oxoglutarate is bound by residues N103 and Y105. Residues H114, D116, and H182 each contribute to the Fe cation site. Residues R218 and S220 each contribute to the 2-oxoglutarate site.

This sequence belongs to the alkB family. As to quaternary structure, interacts with VCPKMT. The cofactor is Fe(2+).

It is found in the cytoplasm. Its subcellular location is the nucleus. Functionally, probable Fe(2+)/2-oxoglutarate-dependent dioxygenase involved in oxidative demethylation of nucleic acids. Binds nucleic acids with a preference for ssDNA or ssRNA to other types of DNAs. May play a role in nucleic acid damage repair. This Mus musculus (Mouse) protein is Probable RNA/DNA demethylase ALKBH6 (Alkbh6).